The sequence spans 80 residues: ATP synthase subunit c (80 aa).

A run of 2 helical transmembrane segments spans residues 8-28 (MIYF…AIGI) and 55-75 (IVMG…LYLI).

Belongs to the ATPase C chain family. As to quaternary structure, F-type ATPases have 2 components, F(1) - the catalytic core - and F(0) - the membrane proton channel. F(1) has five subunits: alpha(3), beta(3), gamma(1), delta(1), epsilon(1). F(0) has three main subunits: a(1), b(2) and c(10-14). The alpha and beta chains form an alternating ring which encloses part of the gamma chain. F(1) is attached to F(0) by a central stalk formed by the gamma and epsilon chains, while a peripheral stalk is formed by the delta and b chains.

The protein localises to the cell inner membrane. Functionally, f(1)F(0) ATP synthase produces ATP from ADP in the presence of a proton or sodium gradient. F-type ATPases consist of two structural domains, F(1) containing the extramembraneous catalytic core and F(0) containing the membrane proton channel, linked together by a central stalk and a peripheral stalk. During catalysis, ATP synthesis in the catalytic domain of F(1) is coupled via a rotary mechanism of the central stalk subunits to proton translocation. Its function is as follows. Key component of the F(0) channel; it plays a direct role in translocation across the membrane. A homomeric c-ring of between 10-14 subunits forms the central stalk rotor element with the F(1) delta and epsilon subunits. The protein is ATP synthase subunit c of Aeromonas salmonicida (strain A449).